Consider the following 275-residue polypeptide: MAIVKVKPTSPGRRAMVKVVNKDLHKGKPYAPLLDTQSSTAGRNNNGHITTRHKGGGHKHHYRIVDFRRTKDGIPAKVERLEYDPNRSANIALVVYADGERRYIIAPKGVTVGQQLMSGSEAPIRAGNTLPIRNIPVGTTIHCIEMLPGKGAQMARSAGTSAMLLAREGTYAQVRLRSGEIRRVHIECRATIGEVGNEEHSLRQIGKAGANRWRGIRPTVRGVAMNPVDHPHGGGEGKTAAGRDPVSPWGTPTKGYRTRSNKRTTSMIVQRRHKR.

Disordered regions lie at residues 28–59 (KPYA…GGHK) and 224–275 (AMNP…RHKR). The span at 35–46 (DTQSSTAGRNNN) shows a compositional bias: polar residues. Basic residues predominate over residues 50–59 (TTRHKGGGHK).

It belongs to the universal ribosomal protein uL2 family. Part of the 50S ribosomal subunit. Forms a bridge to the 30S subunit in the 70S ribosome.

Functionally, one of the primary rRNA binding proteins. Required for association of the 30S and 50S subunits to form the 70S ribosome, for tRNA binding and peptide bond formation. It has been suggested to have peptidyltransferase activity; this is somewhat controversial. Makes several contacts with the 16S rRNA in the 70S ribosome. This Paraburkholderia phymatum (strain DSM 17167 / CIP 108236 / LMG 21445 / STM815) (Burkholderia phymatum) protein is Large ribosomal subunit protein uL2.